Consider the following 122-residue polypeptide: Small ribosomal subunit protein uS13 (122 aa).

The segment covering 95-116 (GLPVRGQKTKTNARTRKGRRKT) has biased composition (basic residues). Residues 95 to 122 (GLPVRGQKTKTNARTRKGRRKTVGAATK) form a disordered region.

Belongs to the universal ribosomal protein uS13 family. As to quaternary structure, part of the 30S ribosomal subunit. Forms a loose heterodimer with protein S19. Forms two bridges to the 50S subunit in the 70S ribosome.

In terms of biological role, located at the top of the head of the 30S subunit, it contacts several helices of the 16S rRNA. In the 70S ribosome it contacts the 23S rRNA (bridge B1a) and protein L5 of the 50S subunit (bridge B1b), connecting the 2 subunits; these bridges are implicated in subunit movement. Contacts the tRNAs in the A and P-sites. This is Small ribosomal subunit protein uS13 from Campylobacter curvus (strain 525.92).